Reading from the N-terminus, the 160-residue chain is MKVLAIFALCIIGALATPCDDFKIMQEAWNTMKNEEVEILYTVFKAYPDIQAKFPQFVGKDLETIKGTAEFAVHATRIVSFMTEVISLLGNPDNLPAIMSLLSKLGKDHKGRGITVKQFDEFHEAFHNFLHTHSVWNDNVDAAWHCNEKEIRKVINANLE.

The first 16 residues, methionine 1 to alanine 16, serve as a signal peptide directing secretion. Residues threonine 17 to glutamate 160 form the Globin domain. Heme b-binding residues include histidine 74 and histidine 109.

It belongs to the globin family.

The chain is Globin CTT-Y (CTT-Y) from Chironomus thummi piger (Midge).